We begin with the raw amino-acid sequence, 428 residues long: Glutamate-1-semialdehyde 2,1-aminomutase (428 aa).

Position 266 is an N6-(pyridoxal phosphate)lysine (K266).

The protein belongs to the class-III pyridoxal-phosphate-dependent aminotransferase family. HemL subfamily. Homodimer. The cofactor is pyridoxal 5'-phosphate.

The protein localises to the cytoplasm. The catalysed reaction is (S)-4-amino-5-oxopentanoate = 5-aminolevulinate. The protein operates within porphyrin-containing compound metabolism; protoporphyrin-IX biosynthesis; 5-aminolevulinate from L-glutamyl-tRNA(Glu): step 2/2. The polypeptide is Glutamate-1-semialdehyde 2,1-aminomutase (Herminiimonas arsenicoxydans).